Consider the following 182-residue polypeptide: Lipid A acyltransferase PagP (182 aa).

An N-terminal signal peptide occupies residues 1–21; sequence MTQYFRSLAFFLLPVPATAMA. Residue C22 is the site of N-palmitoyl cysteine attachment. Residue C22 is the site of S-diacylglycerol cysteine attachment. Residues H55, D98, and S99 contribute to the active site.

It belongs to the lipid A palmitoyltransferase family. Homodimer.

It is found in the cell outer membrane. The catalysed reaction is a lipid A + a 1,2-diacyl-sn-glycero-3-phosphocholine = a hepta-acyl lipid A + a 2-acyl-sn-glycero-3-phosphocholine. The enzyme catalyses a lipid IVA + a 1,2-diacyl-sn-glycero-3-phosphocholine = a lipid IVB + a 2-acyl-sn-glycero-3-phosphocholine. It carries out the reaction a lipid IIA + a 1,2-diacyl-sn-glycero-3-phosphocholine = a lipid IIB + a 2-acyl-sn-glycero-3-phosphocholine. Functionally, transfers a fatty acid residue from the sn-1 position of a phospholipid to the N-linked hydroxyfatty acid chain on the proximal unit of lipid A or its precursors. This is Lipid A acyltransferase PagP from Bordetella pertussis (strain CS).